A 408-amino-acid polypeptide reads, in one-letter code: Multidrug resistance protein MdtG (408 aa).

The next 11 helical transmembrane spans lie at 16 to 36 (LIVA…VMPF), 58 to 78 (IVFS…GGLA), 92 to 112 (LGMG…QFLI), 115 to 135 (ALLG…ATQV), 146 to 166 (TLST…GLLA), 173 to 193 (PVFF…LFCI), 224 to 244 (LFVT…ILTL), 256 to 276 (VAFI…LSAP), 290 to 310 (ILIT…YVQT), 319 to 339 (FLLG…LVYN), and 378 to 398 (AVFL…WNSL).

Belongs to the major facilitator superfamily. DHA1 family. MdtG (TC 2.A.1.2.20) subfamily.

The protein resides in the cell inner membrane. Its function is as follows. Confers resistance to fosfomycin and deoxycholate. The sequence is that of Multidrug resistance protein MdtG from Escherichia coli O139:H28 (strain E24377A / ETEC).